The chain runs to 370 residues: Homoserine O-acetyltransferase (370 aa).

In terms of domain architecture, AB hydrolase-1 spans 44-350 (NAILVAHAWT…AYGHDAFLLE (307 aa)). The Nucleophile role is filled by Ser-150. Arg-217 serves as a coordination point for substrate. Active-site residues include Asp-311 and His-344. Asp-345 lines the substrate pocket.

This sequence belongs to the AB hydrolase superfamily. MetX family. Homodimer.

It is found in the cytoplasm. The enzyme catalyses L-homoserine + acetyl-CoA = O-acetyl-L-homoserine + CoA. It functions in the pathway amino-acid biosynthesis; L-methionine biosynthesis via de novo pathway; O-acetyl-L-homoserine from L-homoserine: step 1/1. Its function is as follows. Transfers an acetyl group from acetyl-CoA to L-homoserine, forming acetyl-L-homoserine. In Geotalea uraniireducens (strain Rf4) (Geobacter uraniireducens), this protein is Homoserine O-acetyltransferase.